Consider the following 110-residue polypeptide: Integration host factor subunit alpha (110 aa).

It belongs to the bacterial histone-like protein family. As to quaternary structure, heterodimer of an alpha and a beta chain.

This protein is one of the two subunits of integration host factor, a specific DNA-binding protein that functions in genetic recombination as well as in transcriptional and translational control. In Delftia acidovorans (strain DSM 14801 / SPH-1), this protein is Integration host factor subunit alpha.